Here is a 261-residue protein sequence, read N- to C-terminus: MSNTVRAISPDITLFNKTLTFQEISQNTREAVIYIHGGAWNDPENTPNDFNQLANTIKSMDTESTVCQYSIEYRLSPEITNPRNLYDAVSNITRLVKEKGLTNINMVGHSVGATFIWQILAALKDPQEKMSEAQLQMLGLLQIVKRVFLLDGIYSLKELLVEYPEYDCFTRLAFPDGIQMYEEEPSRVMPYVKKALSRFSIDMHLVHSYSDELLTLRQTNCLISCLQDYQLSFKLYLDDLGLHNDVYKNGKVAKYIFDNIC.

Serine 9 is modified (phosphoserine). The HGGXW motif lies at 36-40 (HGGAW). Serine 110 (nucleophile) is an active-site residue. Active-site residues include aspartate 211 and histidine 243.

Belongs to the kynurenine formamidase family. In terms of assembly, homodimer.

It carries out the reaction N-formyl-L-kynurenine + H2O = L-kynurenine + formate + H(+). It participates in amino-acid degradation; L-tryptophan degradation via kynurenine pathway; L-kynurenine from L-tryptophan: step 2/2. Functionally, catalyzes the hydrolysis of N-formyl-L-kynurenine to L-kynurenine, the second step in the kynurenine pathway of tryptophan degradation. Kynurenine may be further oxidized to nicotinic acid, NAD(H) and NADP(H). Required for elimination of toxic metabolites. This Saccharomyces cerevisiae (strain ATCC 204508 / S288c) (Baker's yeast) protein is Kynurenine formamidase.